The chain runs to 398 residues: Putative F-box protein At4g17780 (398 aa).

The F-box domain occupies 8–55 (PSSIYIVADLLEDIFLRLPLKSILISKSVSKRWRSILESKTFVERRMS).

In Arabidopsis thaliana (Mouse-ear cress), this protein is Putative F-box protein At4g17780.